The following is a 1921-amino-acid chain: Disks large homolog 5 (1921 aa).

Residues 1-90 enclose the CARD domain; sequence MEPQRRELLA…HLLPILYLNG (90 aa). A disordered region spans residues 116 to 143; sequence ESSSSLSSVGTTGKAPSPPPLLTEQQAN. Residues 139-601 adopt a coiled-coil conformation; sequence EQQANDTVEN…KEARFRQLMA (463 aa). Phosphoserine is present on residues Ser264 and Ser295. 2 PDZ domains span residues 620–710 and 705–796; these read VVEF…RRRK and VVRR…LKVF. The segment at 857–898 is disordered; that stretch reads ELGHSGGSSSFLHKPFSGSSSPVSPQACPSTSERSLNSFRSD. Polar residues predominate over residues 873–898; that stretch reads SGSSSPVSPQACPSTSERSLNSFRSD. At Ser900 the chain carries Phosphoserine. The tract at residues 930 to 1121 is disordered; it reads EVPLDKIDPE…RPKSAPSFRP (192 aa). Thr984 is modified (phosphothreonine). Ser1000 is modified (phosphoserine). At Thr1011 the chain carries Phosphothreonine. A compositionally biased stretch (basic and acidic residues) spans 1017-1030; the sequence is RRSDSIKFQHRLET. Ser1021 carries the phosphoserine modification. Over residues 1045–1055 the composition is skewed to pro residues; that stretch reads TSPPSAPPPSM. Thr1183 bears the Phosphothreonine mark. 3 disordered regions span residues 1204–1227, 1243–1266, and 1280–1343; these read VLPC…SVQH, YSEM…SSSN, and PRYP…KDRP. Residue Ser1209 is modified to Phosphoserine. The span at 1217 to 1227 shows a compositional bias: polar residues; it reads GSQSLSPSVQH. Residues 1252 to 1266 show a composition bias toward low complexity; it reads SNSLPSSARLGSSSN. Ser1263 bears the Phosphoserine mark. Positions 1292–1324 are enriched in polar residues; sequence GSLSHSECSTPPRSPLNIDTLSSCSQPQTTAST. The residue at position 1334 (Ser1334) is a Phosphoserine. In terms of domain architecture, PDZ 3 spans 1350–1429; it reads HVKVQKGSEP…TITILAQYNP (80 aa). Polar residues-rich tracts occupy residues 1434–1443, 1450–1460, and 1483–1495; these read LNSHSRSSSH, PHSTLQGSSAG, and AKQS…SVGD. Residues 1434 to 1501 form a disordered region; sequence LNSHSRSSSH…SVGDTTKKTP (68 aa). The 82-residue stretch at 1504–1585 folds into the PDZ 4 domain; sequence RIVFIKKSQL…SLRLKVQYRH (82 aa). The SH3 domain maps to 1596–1664; sequence GDSFYIRALY…PSKYVMDQEF (69 aa). The residue at position 1669 (Ser1669) is a Phosphoserine. Residues 1724–1907 enclose the Guanylate kinase-like domain; that stretch reads DSVSLAYQRV…ICTQILAMVS (184 aa).

Belongs to the MAGUK family. In terms of assembly, interacts with MPP1. Interacts with CTNNB1 and with the third SH3 domain of SORBS3 to form a ternary complex. Interacts (via coiled-coil domain) with MARK3. Interacts (via PDZ domain 3) with STK3/MST2 and STK4/MST1. Interacts with SCRIB. Interacts with CTNB1. Interacts with SMO and (via PDZ4 or guanylate kinase-like domain) with KIF7. As to expression, brain (at protein level).

The protein resides in the cell junction. Its subcellular location is the cell membrane. The protein localises to the postsynaptic density. It localises to the cytoplasm. It is found in the cytoskeleton. The protein resides in the cilium basal body. Acts as a regulator of the Hippo signaling pathway. Negatively regulates the Hippo signaling pathway by mediating the interaction of MARK3 with STK3/4, bringing them together to promote MARK3-dependent hyperphosphorylation and inactivation of STK3 kinase activity toward LATS1. Positively regulates the Hippo signaling by mediating the interaction of SCRIB with STK4/MST1 and LATS1 which is important for the activation of the Hippo signaling pathway. Involved in regulating cell proliferation, maintenance of epithelial polarity, epithelial-mesenchymal transition (EMT), cell migration and invasion. Plays an important role in dendritic spine formation and synaptogenesis in cortical neurons; regulates synaptogenesis by enhancing the cell surface localization of N-cadherin. Acts as a positive regulator of hedgehog (Hh) signaling pathway. Plays a critical role in the early point of the SMO activity cycle by interacting with SMO at the ciliary base to induce the accumulation of KIF7 and GLI2 at the ciliary tip for GLI2 activation. This is Disks large homolog 5 (Dlg5) from Mus musculus (Mouse).